Reading from the N-terminus, the 358-residue chain is GTPase Obg (358 aa).

In terms of domain architecture, Obg spans 1–159; sequence MKFLDEAKVY…RWIWLRLKLI (159 aa). The 168-residue stretch at 160–327 folds into the OBG-type G domain; that stretch reads ADAGLVGLPN…VLRALVEVIG (168 aa). GTP contacts are provided by residues 166–173, 191–195, 212–215, 279–282, and 308–310; these read GLPNAGKS, FTTLH, DIPG, NKID, and SGV. The Mg(2+) site is built by Ser173 and Thr193. The disordered stretch occupies residues 335–358; that stretch reads AKGADASAAQAMETPVARAKPWSP.

Belongs to the TRAFAC class OBG-HflX-like GTPase superfamily. OBG GTPase family. As to quaternary structure, monomer. The cofactor is Mg(2+).

The protein resides in the cytoplasm. Its function is as follows. An essential GTPase which binds GTP, GDP and possibly (p)ppGpp with moderate affinity, with high nucleotide exchange rates and a fairly low GTP hydrolysis rate. Plays a role in control of the cell cycle, stress response, ribosome biogenesis and in those bacteria that undergo differentiation, in morphogenesis control. This chain is GTPase Obg, found in Nitrobacter winogradskyi (strain ATCC 25391 / DSM 10237 / CIP 104748 / NCIMB 11846 / Nb-255).